The sequence spans 799 residues: Dipeptidyl peptidase family member 1 (799 aa).

Over 1 to 31 the chain is Cytoplasmic; that stretch reads MTAEADLLEGYDEELGGNESQKRDCKGITTA. Residues 32-52 traverse the membrane as a helical; Signal-anchor for type II membrane protein segment; sequence IVVVLLILVMIFAALVFFTPL. Over 53-799 the chain is Lumenal; that stretch reads FAAKSFGSWR…FLRQCFYTDK (747 aa). N-linked (GlcNAc...) asparagine glycans are attached at residues asparagine 64, asparagine 138, asparagine 267, and asparagine 335. Cysteine 474 and cysteine 477 are joined by a disulfide. Asparagine 481 carries an N-linked (GlcNAc...) asparagine glycan. A disulfide bridge links cysteine 482 with cysteine 500. N-linked (GlcNAc...) asparagine glycosylation occurs at asparagine 512. Residues serine 669, aspartate 742, and histidine 774 each act as charge relay system in the active site. Cysteine 689 and cysteine 794 are oxidised to a cystine.

Belongs to the peptidase S9B family. DPPIV subfamily.

It localises to the cell membrane. Functionally, removes N-terminal dipeptides sequentially from polypeptides. Essential for control of distal tip cell migration. The polypeptide is Dipeptidyl peptidase family member 1 (dpf-1) (Caenorhabditis elegans).